Here is a 400-residue protein sequence, read N- to C-terminus: Acetate kinase (400 aa).

Residue N10 participates in Mg(2+) binding. Position 17 (K17) interacts with ATP. R91 serves as a coordination point for substrate. D150 acts as the Proton donor/acceptor in catalysis. ATP-binding positions include 210–214 (HLGNG), 285–287 (DCR), and 333–337 (GIGEN). E387 contributes to the Mg(2+) binding site.

It belongs to the acetokinase family. In terms of assembly, homodimer. Requires Mg(2+) as cofactor. The cofactor is Mn(2+).

It localises to the cytoplasm. It carries out the reaction acetate + ATP = acetyl phosphate + ADP. It functions in the pathway metabolic intermediate biosynthesis; acetyl-CoA biosynthesis; acetyl-CoA from acetate: step 1/2. In terms of biological role, catalyzes the formation of acetyl phosphate from acetate and ATP. Can also catalyze the reverse reaction. The chain is Acetate kinase from Serratia proteamaculans (strain 568).